Reading from the N-terminus, the 312-residue chain is 4-diphosphocytidyl-2-C-methyl-D-erythritol kinase (312 aa).

Residue lysine 18 is part of the active site. 104 to 114 (PIAGGMGGGSA) contacts ATP. Aspartate 146 is an active-site residue.

It belongs to the GHMP kinase family. IspE subfamily.

It carries out the reaction 4-CDP-2-C-methyl-D-erythritol + ATP = 4-CDP-2-C-methyl-D-erythritol 2-phosphate + ADP + H(+). It participates in isoprenoid biosynthesis; isopentenyl diphosphate biosynthesis via DXP pathway; isopentenyl diphosphate from 1-deoxy-D-xylulose 5-phosphate: step 3/6. In terms of biological role, catalyzes the phosphorylation of the position 2 hydroxy group of 4-diphosphocytidyl-2C-methyl-D-erythritol. The protein is 4-diphosphocytidyl-2-C-methyl-D-erythritol kinase of Clavibacter michiganensis subsp. michiganensis (strain NCPPB 382).